We begin with the raw amino-acid sequence, 391 residues long: Ferrochelatase (391 aa).

The Fe cation site is built by His196 and Glu281.

This sequence belongs to the ferrochelatase family.

It localises to the cytoplasm. It carries out the reaction heme b + 2 H(+) = protoporphyrin IX + Fe(2+). The protein operates within porphyrin-containing compound metabolism; protoheme biosynthesis; protoheme from protoporphyrin-IX: step 1/1. Its function is as follows. Catalyzes the ferrous insertion into protoporphyrin IX. This chain is Ferrochelatase, found in Synechococcus sp. (strain WH7803).